We begin with the raw amino-acid sequence, 1241 residues long: DNA-directed RNA polymerase subunit beta (1241 aa).

The protein belongs to the RNA polymerase beta chain family. The RNAP catalytic core consists of 2 alpha, 1 beta, 1 beta' and 1 omega subunit. When a sigma factor is associated with the core the holoenzyme is formed, which can initiate transcription.

The enzyme catalyses RNA(n) + a ribonucleoside 5'-triphosphate = RNA(n+1) + diphosphate. Functionally, DNA-dependent RNA polymerase catalyzes the transcription of DNA into RNA using the four ribonucleoside triphosphates as substrates. The sequence is that of DNA-directed RNA polymerase subunit beta from Clostridium botulinum (strain Alaska E43 / Type E3).